The primary structure comprises 237 residues: DCN1-like protein 5 (237 aa).

Residue S41 is modified to Phosphoserine. The region spanning 46–232 (FSRKKCLAWF…LLDEFVEWQK (187 aa)) is the DCUN1 domain.

As to quaternary structure, part of a complex that contains DCUN1D5, CUL1 and RBX1; this interaction is bridged by CUL1. Interacts (via the DCUN1 domain) with the unneddylated cullins: interacts with CUL1, CUL2, CUL3, CUL4A, CUL4B and CUL5; these interactions promote the cullin neddylation and the identity of the cullin dictates the affinity of the interaction. Interacts (via DCUN1 domain) with UBE2M (N-terminally acetylated form) and probably with UBE2F (N-terminally acetylated form). May also interact with regulators or subunits of cullin-RING ligases such as RBX1, RNF7, ELOB and DDB1; these interactions are bridged by cullins. Interacts with CAND1; this interaction is bridged by cullins and strongly inhibits the neddylation of cullins. These CAND-cullin-DCNL complexes can only be neddylated in the presence of a substrate adapter. In terms of processing, phosphorylation at Ser-41 is independent of cullin's interaction. Phosphorylated in response to both TICAM1 and MYD88 dependent Toll-like receptor (TLR) pathway activation. Phosphorylated in response to IL1B stimulation.

The protein localises to the nucleus. It is found in the cytoplasm. It localises to the cytoskeleton. Its subcellular location is the spindle. Its function is as follows. Contributes to the neddylation of all cullins by transferring NEDD8 from N-terminally acetylated NEDD8-conjugating E2s enzyme to different cullin C-terminal domain-RBX complexes which is necessary for the activation of cullin-RING E3 ubiquitin ligases (CRLs). May play a role in DNA damage response and may participate in cell proliferation and anchorage-independent cell growth. This is DCN1-like protein 5 from Rattus norvegicus (Rat).